The primary structure comprises 399 residues: Homocysteine-responsive endoplasmic reticulum-resident ubiquitin-like domain member 2 protein (399 aa).

Positions 10–89 constitute a Ubiquitin-like domain; sequence VTLVIKAPNQ…HMVHLVCASR (80 aa). Disordered stretches follow at residues 88-144 and 211-250; these read SRTP…SIRH and ASNQSPSNGENAQPVPRPVINSESPPPNPPRAPPNVAPEM. Over residues 95 to 106 the composition is skewed to polar residues; sequence PKASTSNKSMGT. Positions 107–124 are enriched in low complexity; sequence ASISRSSSEHSGSASPAS. A compositionally biased stretch (polar residues) spans 211–221; it reads ASNQSPSNGEN. Pro residues predominate over residues 234 to 246; it reads SPPPNPPRAPPNV. A helical transmembrane segment spans residues 299–319; sequence FVMVMGAMILVYMHQAGWFPL.

Its subcellular location is the membrane. Could be involved in the unfolded protein response (UPR) pathway. The chain is Homocysteine-responsive endoplasmic reticulum-resident ubiquitin-like domain member 2 protein (herpud2) from Xenopus tropicalis (Western clawed frog).